The chain runs to 179 residues: Large ribosomal subunit protein uL10 (179 aa).

It belongs to the universal ribosomal protein uL10 family. In terms of assembly, part of the ribosomal stalk of the 50S ribosomal subunit. The N-terminus interacts with L11 and the large rRNA to form the base of the stalk. The C-terminus forms an elongated spine to which L12 dimers bind in a sequential fashion forming a multimeric L10(L12)X complex.

Its function is as follows. Forms part of the ribosomal stalk, playing a central role in the interaction of the ribosome with GTP-bound translation factors. The polypeptide is Large ribosomal subunit protein uL10 (Kosmotoga olearia (strain ATCC BAA-1733 / DSM 21960 / TBF 19.5.1)).